Consider the following 782-residue polypeptide: cGMP-specific 3',5'-cyclic phosphodiesterase gamma (782 aa).

Residues 1 to 69 (MKHMFKNILF…LCDNMYSKKY (69 aa)) lie on the Cytoplasmic side of the membrane. The chain crosses the membrane as a helical span at residues 70-90 (VILVSHLISLLLMYSVCLIVG). Topologically, residues 91–97 (NINDLFS) are extracellular. Residues 98 to 118 (VLKLTYILLHTFTAINIILIL) traverse the membrane as a helical segment. The Cytoplasmic segment spans residues 119–135 (TLHATHYVEMFKSIKGE). Residues 136 to 156 (IFIFYIMMIFVIWCSWLFILF) traverse the membrane as a helical segment. Residues 157-181 (NNIKDLLPIVVNVNNFLYATYANNK) are Extracellular-facing. The chain crosses the membrane as a helical span at residues 182 to 202 (INIVLGFFAYLPIFYLITIIP). The Cytoplasmic segment spans residues 203-208 (CRICYS). Residues 209 to 229 (CAFDILFFIMKVAIFSVYYLI) form a helical membrane-spanning segment. The Extracellular segment spans residues 230–239 (TMKSYILTDN). The chain crosses the membrane as a helical span at residues 240-260 (IFMIISALVGSLFIFVIRYII). Residues 261-782 (EIQRRLSFHN…YAPNLNIYKL (522 aa)) lie on the Cytoplasmic side of the membrane. Positions 376–396 (GSKEEPEAESESECVDESKEG) are disordered. The segment covering 381–390 (PEAESESECV) has biased composition (acidic residues). The PDEase domain maps to 423–751 (YEEKENEILK…SKWTKIEKDE (329 aa)). H504 (proton donor) is an active-site residue. 504-508 (HNSIH) lines the a nucleoside 3',5'-cyclic phosphate pocket. The a divalent metal cation site is built by H508, H544, D545, and D654. Residues D545, D654, and Q706 each coordinate a nucleoside 3',5'-cyclic phosphate.

This sequence belongs to the cyclic nucleotide phosphodiesterase family. It depends on a divalent metal cation as a cofactor.

The protein resides in the membrane. It is found in the endoplasmic reticulum membrane. The catalysed reaction is 3',5'-cyclic GMP + H2O = GMP + H(+). It participates in purine metabolism; 3',5'-cyclic GMP degradation; GMP from 3',5'-cyclic GMP: step 1/1. Functionally, specifically hydrolyzes the second messenger cGMP, which is a key regulator of many important physiological processes. Probably by regulating cGMP levels, required for sporozoite motility and invasion of the mosquito salivary glands. The protein is cGMP-specific 3',5'-cyclic phosphodiesterase gamma of Plasmodium yoelii.